The chain runs to 400 residues: Enoyl-[acyl-carrier-protein] reductase [NADH] 1 (400 aa).

Residues 48–53 (GASSGY), 74–75 (FE), 111–112 (DA), and 139–140 (LA) each bind NAD(+). Tyrosine 225 is a substrate binding site. Tyrosine 235 serves as the catalytic Proton donor. NAD(+) is bound by residues lysine 244 and 273 to 275 (VVT).

The protein belongs to the TER reductase family. As to quaternary structure, monomer.

It carries out the reaction a 2,3-saturated acyl-[ACP] + NAD(+) = a (2E)-enoyl-[ACP] + NADH + H(+). Its pathway is lipid metabolism; fatty acid biosynthesis. Functionally, involved in the final reduction of the elongation cycle of fatty acid synthesis (FAS II). Catalyzes the reduction of a carbon-carbon double bond in an enoyl moiety that is covalently linked to an acyl carrier protein (ACP). This chain is Enoyl-[acyl-carrier-protein] reductase [NADH] 1, found in Vibrio vulnificus (strain CMCP6).